Here is a 297-residue protein sequence, read N- to C-terminus: N-acetylneuraminate lyase (297 aa).

2 residues coordinate aceneuramate: Ser-47 and Thr-48. Tyr-137 functions as the Proton donor in the catalytic mechanism. Lys-165 (schiff-base intermediate with substrate) is an active-site residue. Residues Thr-167, Gly-189, Asp-191, Glu-192, and Ser-208 each coordinate aceneuramate.

Belongs to the DapA family. NanA subfamily. In terms of assembly, homotetramer.

Its subcellular location is the cytoplasm. The enzyme catalyses aceneuramate = aldehydo-N-acetyl-D-mannosamine + pyruvate. The protein operates within amino-sugar metabolism; N-acetylneuraminate degradation; D-fructose 6-phosphate from N-acetylneuraminate: step 1/5. Functionally, catalyzes the reversible aldol cleavage of N-acetylneuraminic acid (sialic acid; Neu5Ac) to form pyruvate and N-acetylmannosamine (ManNAc) via a Schiff base intermediate. The polypeptide is N-acetylneuraminate lyase (Escherichia coli O139:H28 (strain E24377A / ETEC)).